Here is a 68-residue protein sequence, read N- to C-terminus: Protein SlyX homolog (68 aa).

The protein belongs to the SlyX family.

In Brucella suis (strain ATCC 23445 / NCTC 10510), this protein is Protein SlyX homolog.